The primary structure comprises 349 residues: Cbb3-type cytochrome c oxidase subunit CcoP (349 aa).

Residues 1–67 (MADTDDEHAS…RVVRDRKGGR (67 aa)) form a disordered region. At 1-96 (MADTDDEHAS…NPLPRWWLWT (96 aa)) the chain is on the cytoplasmic side. The span at 16-30 (NRIELERQAADEAHK) shows a compositional bias: basic and acidic residues. A helical transmembrane segment spans residues 97–117 (FYATIVWGVLYLIAYPAIPLV). At 118 to 349 (NGATQGLLGQ…AYVHSLGGGE (232 aa)) the chain is on the periplasmic side. 2 consecutive Cytochrome c domains span residues 168 to 258 (YTAN…LELG) and 265 to 346 (ALAA…HSLG). Positions 181, 184, 185, 233, 278, 281, 282, and 323 each coordinate heme c.

Belongs to the CcoP / FixP family. In terms of assembly, component of the cbb3-type cytochrome c oxidase at least composed of CcoN, CcoO, CcoQ and CcoP. The cofactor is heme c.

The protein resides in the cell inner membrane. It functions in the pathway energy metabolism; oxidative phosphorylation. Functionally, C-type cytochrome. Part of the cbb3-type cytochrome c oxidase complex. CcoP subunit is required for transferring electrons from donor cytochrome c via its heme groups to CcoO subunit. From there, electrons are shuttled to the catalytic binuclear center of CcoN subunit where oxygen reduction takes place. The complex also functions as a proton pump. The chain is Cbb3-type cytochrome c oxidase subunit CcoP from Paracoccus denitrificans (strain Pd 1222).